We begin with the raw amino-acid sequence, 319 residues long: MTEPLRIVFAGTPEFAAEHLKALLDSPYEIVAVYTQPDRPAGRGQKLMPSPVKQLALENNIQVLQPPTLRNADAQAELAALKPDLMVVVAYGLILPQAVLDIPRLGCINSHASLLPRWRGAAPIQRAVEAGDAESGVTVMRMEAGLDTGPMLLKVVTPISAEDTGGSLHDRLAEMGPPAVVQAIAGLAAGTLEGEVQNDELATYAHKLNKDEARIDWSRPAVELERLVRAFNPWPITHSTLNGEALKVLAATLAEGKGAPGTILGASKDGLIVACGEQALCLTRLQLPGGKALNFSDLFNSRREKFATGIVLGAAVDAQ.

Residue 113 to 116 (SLLP) participates in (6S)-5,6,7,8-tetrahydrofolate binding.

Belongs to the Fmt family.

It carries out the reaction L-methionyl-tRNA(fMet) + (6R)-10-formyltetrahydrofolate = N-formyl-L-methionyl-tRNA(fMet) + (6S)-5,6,7,8-tetrahydrofolate + H(+). Functionally, attaches a formyl group to the free amino group of methionyl-tRNA(fMet). The formyl group appears to play a dual role in the initiator identity of N-formylmethionyl-tRNA by promoting its recognition by IF2 and preventing the misappropriation of this tRNA by the elongation apparatus. The sequence is that of Methionyl-tRNA formyltransferase from Pseudomonas fluorescens (strain Pf0-1).